A 1368-amino-acid polypeptide reads, in one-letter code: MAYSFTEKKRIRKSFAKRATVHQVPFLLATQIESYTQFLQAETPAARRKTEGLQAAFNAIFPIASHNGLARMEFVSYHLSNPPFDVKECQQRGLTFHSALRAKVRLIINDRENPGKVKEVKEQEVYMGEIPLMTSTGSFVINGTERVIVSQLHRSPGVFFEHDKGKTHSSGKLLFSARIIPYRGSWLDFEFDPKDILYFRVDRRRKMPVTILLKSIGLTPEQILAHFFVFDNFTLQSEGAQLEFVPERLRGEVARFDIADKNGRVVVEKDKRINAKHIRDLDSAGTKLISVPEDYLLGRVLAKNIIDPDTGEVIANANDELTETVLENLREAGVKQIQTLYTNDLDQGPYMSQTLRVDETADQTAARIAIYRMMRPGEPPTEEAVEALFQRLFYSEESYDLSRVGRMKVNSRLSRPSGEGSMVLQDEDILETIKILVNLRNGKGEVDDIDHLGNRRVRCVGELAENQFRAGLSRVERAVKERLGQAETENLMPHDLINSKPISSAIREFFGSSQLSQFMDQTNPLSEITHKRRVSALGPGGLTRERAGFEVRDVHPTHYGRVCPIETPEGPNIGLINSLALYARLNEYGFLETPYRKVENSKLTDQVDYLSAIEEGKYVVAQANATVDAEGNLTDELVSAREGSERETRMVTPDRVQYIDVAPSQIVSAAASLVPFLEHDDANRALMGANMQRQAVPCLRPDKPLVGTGIERTVAVDSGTAVQAMRGGVVDYVDAMRIVIRVNDDEAVAGEVGVDIYNLIKYTRSNQNTNINQRPMVKVGDIVARGDVVADGASTDLGELALGQNMLVAFMPWNGYNFEDSILISERVVAEDRYTSIHIEELSVVARDTKLGPEEITRDISNLAEAQLARLDESGITYIGAEVEAGDVLVGKVTPKGETQLTPEEKLLRAIFGEKASDVKDTSLRVPSGMSGIVIDVQVFTREGVTRDKRAQSIIDDELKRYRLDLNDQLRIVEGDAFQRLERLLIDKTVNGGPKKLAKGAKLTKEYLAEIDKYHWFDIRPADEEVAAQLEAVKEAIEQKRHEFDLAFEEKRKKLTQGDELPPGVIKMVKVYLAVKRRLQPGDKMAGRHGNKGVVSKIVPIEDMPYMADGTPADIVLNPLGVPSRMNVGQILETHLGWAARGLGQRIGDMLKASAKAQELRPLLAQIYNESGKAEDLDSLSDAEVLELATNLKKGVPFATPVFDGAHEDEIRRMLDLAYPDDIAKEKGLTASKQQVTLHDGRTGEAFERPVTLGVMHMLKLHHLVDDKMHARSTGPYSLVTQQPLGGKAQFGGQRFGEMEVWALEAYGASYVLQEMLTVKSDDVNGRTKVYENIVKGEHSIDAGMPESFNVLVKEIRSLGIDIDLDRY.

It belongs to the RNA polymerase beta chain family. In terms of assembly, the RNAP catalytic core consists of 2 alpha, 1 beta, 1 beta' and 1 omega subunit. When a sigma factor is associated with the core the holoenzyme is formed, which can initiate transcription.

It catalyses the reaction RNA(n) + a ribonucleoside 5'-triphosphate = RNA(n+1) + diphosphate. Its function is as follows. DNA-dependent RNA polymerase catalyzes the transcription of DNA into RNA using the four ribonucleoside triphosphates as substrates. This Cupriavidus pinatubonensis (strain JMP 134 / LMG 1197) (Cupriavidus necator (strain JMP 134)) protein is DNA-directed RNA polymerase subunit beta.